We begin with the raw amino-acid sequence, 185 residues long: Anaphase-promoting complex subunit 10 (185 aa).

The residue at position 2 (Thr2) is an N-acetylthreonine. The region spanning 2–185 (TTPNKTPPGA…IDFMMYRSIR (184 aa)) is the DOC domain. N6-acetyllysine is present on Lys169.

The protein belongs to the APC10 family. In terms of assembly, the mammalian APC/C is composed at least of 14 distinct subunits ANAPC1, ANAPC2, CDC27/APC3, ANAPC4, ANAPC5, CDC16/APC6, ANAPC7, CDC23/APC8, ANAPC10, ANAPC11, CDC26/APC12, ANAPC13, ANAPC15 and ANAPC16 that assemble into a complex of at least 19 chains with a combined molecular mass of around 1.2 MDa; APC/C interacts with FZR1 and FBXO5. The C-terminus of APC10 binds to CDC27/APC3. Interacts with PIWIL1; interaction only takes place when PIWIL1 binds piRNA. Interacts with FBXO43; the interaction is direct.

The protein operates within protein modification; protein ubiquitination. Its function is as follows. Component of the anaphase promoting complex/cyclosome (APC/C), a cell cycle-regulated E3 ubiquitin ligase that controls progression through mitosis and the G1 phase of the cell cycle. The APC/C complex acts by mediating ubiquitination and subsequent degradation of target proteins: it mainly mediates the formation of 'Lys-11'-linked polyubiquitin chains and, to a lower extent, the formation of 'Lys-48'- and 'Lys-63'-linked polyubiquitin chains. The APC/C complex catalyzes assembly of branched 'Lys-11'-/'Lys-48'-linked branched ubiquitin chains on target proteins. This Bos taurus (Bovine) protein is Anaphase-promoting complex subunit 10 (ANAPC10).